The chain runs to 419 residues: MSICSTVGAGLNLHSPANATNSTRLSSNFVHQIPVSSFSFSFQSSSLRLSQTPKFSRQRRNPIVVSSTPVVESTKSSFRAKNPKDTNILVVGSTGYIGNFVVKELVSRGFNVIAIAREKSGIKGRNSKEQASDQLKGANVCFSDVSHLDVLEKSLGDLDVPIDVVVSCLASRTGGIKDSWKIDYEATKNSLVAGRNRGASHFVLLSAICVQKPLLEFQRAKLKFEAELMEAAKEDSGFTYSIVRPTAFFKSLGGQVELVKDGKPYVMFGDGKLCACKPISEQDLASFIADCVLSEDKINQVLPIGGPGKALTPLEQGEILFRLLGKEPNFFKVPIGIMDFAIGVLDFLVKFFPAMEDAAEYGKIGRYYAAESMLILDPETGEYSADKTPSYGKDTLEDFFERVLSEGMAGQELGEQSVF.

Residues 1–71 (MSICSTVGAG…PIVVSSTPVV (71 aa)) constitute a chloroplast transit peptide.

The protein resides in the plastid. It localises to the chloroplast. It carries out the reaction protochlorophyllide a + NADP(+) = 3,8-divinyl protochlorophyllide a + NADPH + H(+). It participates in porphyrin-containing compound metabolism; chlorophyll biosynthesis. Its function is as follows. Catalyzes the conversion of divinyl chlorophyllide to monovinyl chlorophyllide. Reduces the 8-vinyl group of the tetrapyrrole to an ethyl group using NADPH as the reductant. The best substrate is (3,8-divinyl)-chlorophyllide a (DV-Chlidea). Very low activity with (3,8-divinyl)-protochlorophyllide a (DV-Pchlidea) and (3,8-divinyl)-magnesium-protoporphyrin IX monomethyl ester (DV-MPE). No activity with (3,8-divinyl)-magnesium-protoporphyrin IX (DV-Mg-Proto) and (3,8-divinyl)-chlorophyll a (DV-Chla). This Cucumis sativus (Cucumber) protein is Divinyl chlorophyllide a 8-vinyl-reductase, chloroplastic (DVR).